Reading from the N-terminus, the 445-residue chain is Tubulin beta chain (445 aa).

Positions 11, 69, 138, 142, 143, 144, 204, and 226 each coordinate GTP. Position 69 (E69) interacts with Mg(2+). The tract at residues 426-445 is disordered; sequence QDATAEEEGEFEEEEGDVEA. The segment covering 429–445 has biased composition (acidic residues); the sequence is TAEEEGEFEEEEGDVEA.

The protein belongs to the tubulin family. In terms of assembly, dimer of alpha and beta chains. A typical microtubule is a hollow water-filled tube with an outer diameter of 25 nm and an inner diameter of 15 nM. Alpha-beta heterodimers associate head-to-tail to form protofilaments running lengthwise along the microtubule wall with the beta-tubulin subunit facing the microtubule plus end conferring a structural polarity. Microtubules usually have 13 protofilaments but different protofilament numbers can be found in some organisms and specialized cells. Interacts with DCX/apicortin; the interaction stabilizes microtubule assembly. It depends on Mg(2+) as a cofactor.

The protein localises to the cytoplasm. Its subcellular location is the cytoskeleton. Functionally, tubulin is the major constituent of microtubules, a cylinder consisting of laterally associated linear protofilaments composed of alpha- and beta-tubulin heterodimers. Microtubules grow by the addition of GTP-tubulin dimers to the microtubule end, where a stabilizing cap forms. Below the cap, tubulin dimers are in GDP-bound state, owing to GTPase activity of alpha-tubulin. This Plasmodium falciparum protein is Tubulin beta chain.